Here is a 207-residue protein sequence, read N- to C-terminus: Coiled-coil domain-containing protein 25 (207 aa).

Residues 1–104 (MVFYFTSAVV…SNLKKTADMD (104 aa)) are Extracellular-facing. The tract at residues 20 to 24 (KDKYE) is DNA-binding. Residues 105-121 (IGQIGFHRQKEVKIVAV) form a helical membrane-spanning segment. The stretch at 112 to 189 (RQKEVKIVAV…EDLKNYTSLM (78 aa)) forms a coiled coil. Residues 122 to 207 (EKKINEIVNR…EDGYDSDDFM (86 aa)) lie on the Cytoplasmic side of the membrane. Positions 140–183 (YPDLAAEKESRDREERNEKKAQIQEQKKKEKEEVKKKKEMEDLK) are enriched in basic and acidic residues. The segment at 140–207 (YPDLAAEKES…EDGYDSDDFM (68 aa)) is disordered. The segment covering 184-198 (NYTSLMKSDNMTTNE) has biased composition (polar residues). S203 carries the phosphoserine modification.

The protein belongs to the CCDC25 family. As to quaternary structure, interacts (via cytoplasmic region) with ILK.

It is found in the cell membrane. The protein resides in the endomembrane system. In terms of biological role, transmembrane receptor that senses neutrophil extracellular traps (NETs) and triggers the ILK-PARVB pathway to enhance cell motility. NETs are mainly composed of DNA fibers and are released by neutrophils to bind pathogens during inflammation. Specifically binds NETs on its extracellular region, in particular the 8-OHdG-enriched DNA present in NETs, and recruits ILK, initiating the ILK-PARVB cascade to induce cytoskeleton rearrangement and directional migration of cells. This is Coiled-coil domain-containing protein 25 from Danio rerio (Zebrafish).